We begin with the raw amino-acid sequence, 397 residues long: Lysophospholipid transporter LplT (397 aa).

Residues 1–17 (MSESVHTNTSLWSKGMK) are Periplasmic-facing. The helical transmembrane segment at 18-38 (AVIVAQFLSAFGDNALLFATL) threads the bilayer. The Cytoplasmic portion of the chain corresponds to 39 to 52 (ALLKAQFYPEWSQP). Residues 53–73 (ILQMVFVGAYILFAPFVGQVA) traverse the membrane as a helical segment. At 74-90 (DSFAKGRVMMFANGLKL) the chain is on the periplasmic side. Residues 91-111 (LGAASICFGINPFLGYTLVGV) traverse the membrane as a helical segment. Over 112-144 (GAAAYSPAKYGILGELTTGSKLVKANGLMEAST) the chain is Cytoplasmic. Residues 145–165 (IAAILLGSVAGGVLADWHVLV) traverse the membrane as a helical segment. Residue Ala166 is a topological domain, periplasmic. The helical transmembrane segment at 167–187 (LAACALAYGGAVVANIYIPKL) threads the bilayer. Topologically, residues 188–226 (AAARPGQSWNLINMTRSFLNACTSLWRNGETRFSLVGTS) are cytoplasmic. A helical transmembrane segment spans residues 227–247 (LFWGAGVTLRFLLVLWVPVAL). The Periplasmic segment spans residues 248–256 (GITDNATPT). Residues 257-277 (YLNAMVAIGIVVGAGAAAKLV) traverse the membrane as a helical segment. Topologically, residues 278-280 (TLE) are cytoplasmic. Residues 281 to 301 (TVSRCMPAGILIGVVVLIFSL) traverse the membrane as a helical segment. The Periplasmic portion of the chain corresponds to 302-304 (QHE). The helical transmembrane segment at 305–325 (LLPAYALLMLIGVMGGFFVVP) threads the bilayer. The Cytoplasmic segment spans residues 326 to 343 (LNALLQERGKKSVGAGNA). A helical transmembrane segment spans residues 344 to 364 (IAVQNLGENSAMLLMLGIYSL). Topologically, residues 365 to 366 (AV) are periplasmic. A helical transmembrane segment spans residues 367 to 387 (MVGIPVVPIGIGFGALFALAI). The Cytoplasmic portion of the chain corresponds to 388 to 397 (TALWIWQRRH).

Belongs to the major facilitator superfamily. LplT (TC 2.A.1.42) family.

It is found in the cell inner membrane. Its function is as follows. Catalyzes the facilitated diffusion of 2-acyl-glycero-3-phosphoethanolamine (2-acyl-GPE) into the cell. The chain is Lysophospholipid transporter LplT from Escherichia coli (strain ATCC 8739 / DSM 1576 / NBRC 3972 / NCIMB 8545 / WDCM 00012 / Crooks).